The sequence spans 131 residues: Small ribosomal subunit protein uS9 (131 aa).

The protein belongs to the universal ribosomal protein uS9 family.

The polypeptide is Small ribosomal subunit protein uS9 (Mannheimia succiniciproducens (strain KCTC 0769BP / MBEL55E)).